The following is a 292-amino-acid chain: tRNA dimethylallyltransferase (292 aa).

Residue 10 to 17 (GPTASGKS) coordinates ATP. A substrate-binding site is contributed by 12 to 17 (TASGKS). Interaction with substrate tRNA stretches follow at residues 35–38 (DSMQ) and 159–163 (QRIVR).

It belongs to the IPP transferase family. Monomer. Requires Mg(2+) as cofactor.

The catalysed reaction is adenosine(37) in tRNA + dimethylallyl diphosphate = N(6)-dimethylallyladenosine(37) in tRNA + diphosphate. In terms of biological role, catalyzes the transfer of a dimethylallyl group onto the adenine at position 37 in tRNAs that read codons beginning with uridine, leading to the formation of N6-(dimethylallyl)adenosine (i(6)A). The chain is tRNA dimethylallyltransferase from Chelativorans sp. (strain BNC1).